A 412-amino-acid chain; its full sequence is Adenosine receptor A2a (412 aa).

The Extracellular segment spans residues 1-7 (MSTMGSW). The helical transmembrane segment at 8-32 (VYITVELAIAVLAILGNVLVCWAVW) threads the bilayer. Over 33–42 (LNSNLQNVTN) the chain is Cytoplasmic. Residues 43–66 (YFVVSLAAADIAVGVLAIPFAITI) traverse the membrane as a helical segment. At 67 to 77 (STGFCAACHNC) the chain is on the extracellular side. Intrachain disulfides connect cysteine 71/cysteine 159, cysteine 74/cysteine 146, and cysteine 77/cysteine 166. Residues 78–100 (LFFACFVLVLTQSSIFSLLAIAI) traverse the membrane as a helical segment. At 101–120 (DRYIAIRIPLRYNGLVTGTR) the chain is on the cytoplasmic side. A helical transmembrane segment spans residues 121-143 (AKGIIAVCWVLSFAIGLTPMLGW). The Extracellular portion of the chain corresponds to 144–173 (NNCSQPKEGRNYSQGCGEGQVACLFEDVVP). N-linked (GlcNAc...) asparagine glycans are attached at residues asparagine 145 and asparagine 154. Glutamate 169 is a binding site for adenosine. A helical membrane pass occupies residues 174 to 198 (MNYMVYYNFFAFVLVPLLLMLGVYL). Residues 199-234 (RIFLAARRQLKQMESQPLPGERARSTLQKEVHAAKS) lie on the Cytoplasmic side of the membrane. Residues 235–258 (LAIIVGLFALCWLPLHIINCFTFF) form a helical membrane-spanning segment. Position 253 (asparagine 253) interacts with adenosine. A disulfide bridge links cysteine 259 with cysteine 262. Topologically, residues 259–266 (CPECSHAP) are extracellular. Residues 267 to 290 (LWLMYLTIVLSHTNSVVNPFIYAY) form a helical membrane-spanning segment. Positions 277 and 278 each coordinate adenosine. The Cytoplasmic portion of the chain corresponds to 291-412 (RIREFRQTFR…PLAQDGAGVS (122 aa)). The segment at 392 to 412 (GACPESPGLEGPLAQDGAGVS) is disordered.

The protein belongs to the G-protein coupled receptor 1 family. In terms of assembly, interacts (via cytoplasmic C-terminal domain) with USP4; the interaction is direct. May interact with DRD4. Interacts with NECAB2. Interacts (via cytoplasmic C-terminal domain) with GAS2L2; interaction enhances receptor-mediated adenylyl cyclase activity. Ubiquitinated. Deubiquitinated by USP4; leading to stabilization and expression at the cell surface.

The protein resides in the cell membrane. Functionally, receptor for adenosine. The activity of this receptor is mediated by G proteins which activate adenylyl cyclase. In Canis lupus familiaris (Dog), this protein is Adenosine receptor A2a (ADORA2A).